Consider the following 307-residue polypeptide: UDP-3-O-acyl-N-acetylglucosamine deacetylase (307 aa).

3 residues coordinate Zn(2+): histidine 78, histidine 241, and aspartate 245. Histidine 268 (proton donor) is an active-site residue.

This sequence belongs to the LpxC family. Requires Zn(2+) as cofactor.

It carries out the reaction a UDP-3-O-[(3R)-3-hydroxyacyl]-N-acetyl-alpha-D-glucosamine + H2O = a UDP-3-O-[(3R)-3-hydroxyacyl]-alpha-D-glucosamine + acetate. Its pathway is glycolipid biosynthesis; lipid IV(A) biosynthesis; lipid IV(A) from (3R)-3-hydroxytetradecanoyl-[acyl-carrier-protein] and UDP-N-acetyl-alpha-D-glucosamine: step 2/6. In terms of biological role, catalyzes the hydrolysis of UDP-3-O-myristoyl-N-acetylglucosamine to form UDP-3-O-myristoylglucosamine and acetate, the committed step in lipid A biosynthesis. The protein is UDP-3-O-acyl-N-acetylglucosamine deacetylase of Acidovorax ebreus (strain TPSY) (Diaphorobacter sp. (strain TPSY)).